A 340-amino-acid chain; its full sequence is MVSDVSEPSDTTPEVVVQQQPQPKTLTHLISGASAGLISAISLQPFDLLKTRLQQQQRSNIKYRTTISKELKKLTHIRDLWRGALPSTLRTSVGAGLYFTILSSARNGISDYKRSSDSVSDTSILPKLSPFENLATGFIVRAVVGIITMPITIVKTRYESNIYNYNSMYEGFENIYLDGNQKGQGSLKNFFKGSFATLARDCPYAGMYVLFYELFKNDILTKVVPPIDETENGPITRSTIINTSAAILAASVSTTITAPFDAIKTRLQLSSIVASKKMTLWSATKDLMREDGGVKNLFRGLSLRFGRKGLSSGISWCIYEELIKSNFAQVIITKSDKKLV.

Solcar repeat units follow at residues 23–108 (PKTL…ARNG), 128–218 (LSPF…FKND), and 237–325 (RSTI…LIKS). Transmembrane regions (helical) follow at residues 29–54 (LISGASAGLISAISLQPFDLLKTRLQ), 83–109 (GALPSTLRTSVGAGLYFTILSSARNGI), 134–159 (LATGFIVRAVVGIITMPITIVKTRYE), 193–216 (GSFATLARDCPYAGMYVLFYELFK), 241–267 (INTSAAILAASVSTTITAPFDAIKTRL), and 300–318 (GLSLRFGRKGLSSGISWCI).

This sequence belongs to the mitochondrial carrier (TC 2.A.29) family. SLC25A38 subfamily.

Its subcellular location is the mitochondrion inner membrane. It catalyses the reaction glycine(in) = glycine(out). In terms of biological role, mitochondrial glycine transporter that imports glycine into the mitochondrial matrix. Plays an important role in providing glycine for the first enzymatic step in heme biosynthesis, the condensation of glycine with succinyl-CoA to produce 5-aminolevulinate (ALA) in the mitochondrial matrix. The chain is Mitochondrial glycine transporter from Debaryomyces hansenii (strain ATCC 36239 / CBS 767 / BCRC 21394 / JCM 1990 / NBRC 0083 / IGC 2968) (Yeast).